Here is a 439-residue protein sequence, read N- to C-terminus: Choline monooxygenase, chloroplastic (439 aa).

Residues 1–60 (MMAASASATTMLLKYPTTVCGIPNPSSNNNNDPSNNIVSIPQNTTNPTLKSRTPNKITTN) constitute a chloroplast transit peptide. Residues 24–41 (NPSSNNNNDPSNNIVSIP) show a composition bias toward low complexity. The segment at 24–54 (NPSSNNNNDPSNNIVSIPQNTTNPTLKSRTP) is disordered. The segment covering 42–54 (QNTTNPTLKSRTP) has biased composition (polar residues). The Rieske domain maps to 120–227 (WQVAGISDQI…VAVWGPFVLI (108 aa)). The [2Fe-2S] cluster site is built by cysteine 162, histidine 164, cysteine 181, and histidine 184. Fe cation-binding residues include histidine 287 and histidine 292.

Homotrimer or homodimer. Requires [2Fe-2S] cluster as cofactor. The cofactor is Fe cation. Mg(2+) serves as cofactor. As to expression, expressed in leaves.

The protein resides in the plastid. Its subcellular location is the chloroplast stroma. It carries out the reaction choline + 2 reduced [2Fe-2S]-[ferredoxin] + O2 + 2 H(+) = betaine aldehyde hydrate + 2 oxidized [2Fe-2S]-[ferredoxin] + H2O. It functions in the pathway amine and polyamine biosynthesis; betaine biosynthesis via choline pathway; betaine aldehyde from choline (monooxygenase route): step 1/1. In terms of biological role, catalyzes the first step of the osmoprotectant glycine betaine synthesis. The sequence is that of Choline monooxygenase, chloroplastic (CMO) from Spinacia oleracea (Spinach).